The primary structure comprises 155 residues: Probable adenylyl-sulfate kinase (155 aa).

Position 9–16 (9–16 (GPSGAGKT)) interacts with ATP. Ser83 acts as the Phosphoserine intermediate in catalysis. A disordered region spans residues 134 to 155 (LDGEYEEPENPEVVVDTDKNDR).

Belongs to the APS kinase family.

It carries out the reaction adenosine 5'-phosphosulfate + ATP = 3'-phosphoadenylyl sulfate + ADP + H(+). It functions in the pathway sulfur metabolism; hydrogen sulfide biosynthesis; sulfite from sulfate: step 2/3. Functionally, catalyzes the synthesis of activated sulfate. This is Probable adenylyl-sulfate kinase (cysC) from Archaeoglobus fulgidus (strain ATCC 49558 / DSM 4304 / JCM 9628 / NBRC 100126 / VC-16).